An 859-amino-acid polypeptide reads, in one-letter code: MGTTASTAQQTVSAGTSLEGLQGGSSSSMDSQHSLGGVQSFRATSLHNSKAKSIIPNKVAPVVITYNCKEEFQIHDELLKAHYRMGRLSDATPEHYLVQGRYFLVRDITEKMDILGTLKSCGAPNFRQVRGGLPVFGMGQPSLLGFRRVLQKLQTDGLKECIIFCVREEPVVFLRAEEDFVSYTPRDKESLHENLRDPSPGVKAENLELAIQKEIHDFAQLRDNVYHVYHNTEDLRGEPHTVAIRGEDGVCVTEEVFKRPLLLQPTYRYHHLPLPEQGPPLEAQFDAFVSVLRETPSLLPLRDNHGPLPALLFSCQSGVGRTNLGMVLGTLVMFHHSRTTSQLEAASPLAKPLPMEQFQVIQGFICKVPQGKKMVEEVDRAISACAELHDLKEEVLKNQRRLESFRPESRGQECGSQQAVQQRALWSLELYFYLLLFNYYLHEQYPLAFALSFSRWLCTHPELYRLLVELNSVGPLVPGDLIAKGSLEADDLVSLDALSTVREMDVANFRRVPRMPIYGTAQPSAKALGNILAYLSDAKRKLRQVVWIFLREEVVLECDGHTHSLWPPGPALAPEHLVALEAQLKAHLSAPVPNTKSPTAPRFQKCLTTQEVFSQHQGACLGLTYCRIPVPDFCAPREEDFDRLLEALRAALTKDPGTGFVFSCLSGQGRTTTAMVVAVLACWHIGGCPEVGEEELVSVPDAKFTKGEFQVVMKVVQLLPDGHHVKKEVDAALDIVSETMTPMHYHLREIIISTYRQAKATKEAQEAQRLQLRSLQYLERYIYLILFNAYLRLEKTSSWQRPFSTWMREVATKAGIYEILNQLGFPELESIEEQPLSRLRYRWQEQSRDPEPCDVGDFL.

A disordered region spans residues 1 to 34; it reads MGTTASTAQQTVSAGTSLEGLQGGSSSSMDSQHS. Glycine 2 is lipidated: N-myristoyl glycine. Serine 89 carries the post-translational modification Phosphoserine.

Belongs to the paladin family. Vascular expression detected in the central nervous system, kidney, lung, heart, skeletal muscle, white adipose tissue (WAT), brown adipose tissue, liver, pancreas and spleen. Not expressed in all vessels: for instance, not expressed in capillaries in the brain, and expressed mainly in large vessels in the heart, WAT, liver, pancreas and kidney. Predominant nonvascular expression in myocardium and lung mesenchyme. In large vessels, primarily expressed by smooth muscle cells, but occasionally detected at low levels in the endothelium. Expressed in various cells of the hematopoietic lineage.

Its subcellular location is the cytoplasm. It is found in the cytosol. This chain is Paladin (Pald1), found in Mus musculus (Mouse).